Here is a 1031-residue protein sequence, read N- to C-terminus: MGPCHGALQPLSLLVQAAMLAVALAQGTLPPFLPCELQPHGLVNCNWLFLKSVPHFSAAAPRDNVTSLSLLSNRIHHLHDSDFAQLSNLQKLNLKWNCPPAGLSPMHFPCHMTIEPNTFLAVPTLEELNLSYNGITTVPALPSSLVSLILSRTNILQLDPTSLTGLHALRFLYMDGNCYYKNPCGRALEVAPGALLGLGNLTHLSLKYNNLTTVPRSLPPSLEYLLLSYNHIVTLAPEDLANLTALRVLDVGGNCRRCDHARNPCVECPHKFPQLHSDTFSHLSRLEGLVLKDSSLYQLNPRWFRGLGNLTVLDLSENFLYDCITKTKAFQGLAQLRRLNLSFNYHKKVSFAHLTLAPSFGSLLSLQELDMHGIFFRSLSQKTLQPLARLPMLQRLYLQMNFINQAQLGIFKDFPGLRYIDLSDNRISGAVEPVATTGEVDGGKKVWLTSRDLTPGPLDTPSSEDFMPSCKNLSFTLDLSRNNLVTVQPEMFAQLSRLQCLRLSHNSISQAVNGSQFVPLTSLQVLDLSHNKLDLYHGRSFTELPRLEALDLSYNSQPFSMRGVGHNLSFVAQLPTLRYLSLAHNGIHSRVSQQLCSTSLWALDFSGNSLSQMWAEGDLYLRFFQGLRSLIRLDLSQNRLHTLLPCTLGNLPKSLQLLRLRNNYLAFFNWSSLTLLPNLETLDLAGNQLKALSNGSLPSGTQLQRLDVSRNSIIFVVPGFFALATRLRELNLSANALRTVEPSWFGFLAGSLEVLDVSANPLHCACGAAFVDFLLQVQAAVPGLPSRVKCGSPGQLQGRSIFAQDLRLCLDESLSWDCFGLSLLVVALGLAMPMLHHLCGWDLWYCFHLGLAWLPRRGWQRGADALSYDAFVVFDKAQSAVADWVYNELRVRLEERRGRRALRLCLEERDWLPGKTLFENLWASVYSSRKMLFVLAHTDQVSGLLRASFLLAQQRLLEDRKDVVVLVILSPDARRSRYVRLRQRLCRQSVLFWPHQPSGQRSFWAQLGMALTRDNRHFYNQNFCRGPTMAE.

The N-terminal stretch at 1-25 (MGPCHGALQPLSLLVQAAMLAVALA) is a signal peptide. The Extracellular segment spans residues 26–817 (QGTLPPFLPC…LCLDESLSWD (792 aa)). The cysteines at positions 35 and 45 are disulfide-linked. 47–51 (WLFLK) provides a ligand contact to DNA. 26 LRR repeats span residues 62–85 (RDNVTSLSLLSNRIHHLHDSDFAQ), 87–110 (SNLQKLNLKWNCPPAGLSPMHFPC), 122–147 (VPTLEELNLSYNGITTVPALPSSLVS), 150–166 (LSRTNILQLDPTSLTGL), 167–190 (HALRFLYMDGNCYYKNPCGRALEV), 198–221 (LGNLTHLSLKYNNLTTVPRSLPPS), 223–242 (EYLLLSYNHIVTLAPEDLAN), 243–268 (LTALRVLDVGGNCRRCDHARNPCVEC), 283–306 (LSRLEGLVLKDSSLYQLNPRWFRG), 308–332 (GNLTVLDLSENFLYDCITKTKAFQG), 333–356 (LAQLRRLNLSFNYHKKVSFAHLTL), 363–386 (LLSLQELDMHGIFFRSLSQKTLQP), 390–413 (LPMLQRLYLQMNFINQAQLGIFKD), 414–438 (FPGLRYIDLSDNRISGAVEPVATTG), 470–494 (CKNLSFTLDLSRNNLVTVQPEMFAQ), 496–519 (SRLQCLRLSHNSISQAVNGSQFVP), 520–543 (LTSLQVLDLSHNKLDLYHGRSFTE), 545–567 (PRLEALDLSYNSQPFSMRGVGHN), 574–598 (LPTLRYLSLAHNGIHSRVSQQLCST), 600–622 (LWALDFSGNSLSQMWAEGDLYLR), 627–650 (LRSLIRLDLSQNRLHTLLPCTLGN), 652–675 (PKSLQLLRLRNNYLAFFNWSSLTL), 676–699 (LPNLETLDLAGNQLKALSNGSLPS), 701–723 (TQLQRLDVSRNSIIFVVPGFFAL), 724–747 (ATRLRELNLSANALRTVEPSWFGF), and 749–772 (AGSLEVLDVSANPLHCACGAAFVD). A glycan (N-linked (GlcNAc...) asparagine) is linked at Asn-64. Residues 72 to 77 (SNRIHH) and 95 to 109 (KWNCPPAGLSPMHFP) each bind DNA. Residues Cys-98 and Cys-110 are joined by a disulfide bond. Asn-129 is a glycosylation site (N-linked (GlcNAc...) asparagine). DNA-binding positions include Tyr-132, Arg-152, and 179 to 181 (YYK). Cys-178 and Cys-184 are oxidised to a cystine. The N-linked (GlcNAc...) asparagine glycan is linked to Asn-200. Position 208 (Tyr-208) interacts with DNA. 2 N-linked (GlcNAc...) asparagine glycosylation sites follow: Asn-210 and Asn-242. Intrachain disulfides connect Cys-255–Cys-268 and Cys-258–Cys-265. A lipid anchor (S-palmitoyl cysteine) is attached at Cys-258. A DNA-binding site is contributed by Arg-262. Cys-265 is lipidated: S-palmitoyl cysteine. Asn-309 and Asn-340 each carry an N-linked (GlcNAc...) asparagine glycan. An intrachain disulfide couples Cys-470 to Cys-500. N-linked (GlcNAc...) asparagine glycans are attached at residues Asn-472 and Asn-513. N-linked (GlcNAc...) asparagine glycosylation occurs at Asn-567. Asn-669 and Asn-694 each carry an N-linked (GlcNAc...) asparagine glycan. Asn-731 is a glycosylation site (N-linked (GlcNAc...) asparagine). Intrachain disulfides connect Cys-764–Cys-790 and Cys-766–Cys-809. The helical transmembrane segment at 818–838 (CFGLSLLVVALGLAMPMLHHL) threads the bilayer. Residues 839–1031 (CGWDLWYCFH…NFCRGPTMAE (193 aa)) lie on the Cytoplasmic side of the membrane. Residues 866-1011 (LSYDAFVVFD…SFWAQLGMAL (146 aa)) enclose the TIR domain.

Belongs to the Toll-like receptor family. Monomer and homodimer. Exists as a monomer in the absence of unmethylated cytidine-phosphate-guanosine (CpG) ligand. Proteolytic processing of an insertion loop (Z-loop) is required for homodimerization upon binding to the unmethylated CpG ligand leading to its activation. Interacts with MYD88 via their respective TIR domains. Interacts with BTK. Interacts (via transmembrane domain) with UNC93B1. Interacts with CD300LH; the interaction may promote full activation of TLR9-triggered innate responses. Interacts with CNPY3 and HSP90B1; this interaction is required for proper folding in the endoplasmic reticulum. Interacts with SMPDL3B. Interacts with CD82; this interaction is essential for TLR9-dependent myddosome formation in response to CpG stimulation. In terms of processing, activated by proteolytic cleavage of the flexible loop between repeats LRR14 and LRR15 within the ectodomain. Cleavage requires UNC93B1. Proteolytically processed by first removing the majority of the ectodomain by either asparagine endopeptidase (AEP) or a cathepsin followed by a trimming event that is solely cathepsin mediated and required for optimal receptor signaling. Post-translationally, palmitoylated by ZDHHC3 in the Golgi regulates TLR9 trafficking from the Golgi to endosomes. Depalmitoylation by PPT1 controls the release of TLR9 from UNC93B1 in endosomes. As to expression, expressed in airway epithelium, vascular endothelium and inflammatory cells in blood vessels of the lungs (at protein level). Highly expressed in pulmonary intravascular macrophages (PIMs) and to a lesser extent in alveolar macrophages, neutrophiles, type-II alveolar epithelial cells and bronchial epithelial cells of the lungs (at protein level). High constitutive intracellular expression in leukocytes including polymorphonuclear leukocytes (PMNs), CD4 and CD8 T cells (at protein level). Expressed throughout the respiratory tract including larynx, upper, middle and lower trachea, and bronchus in isolated equine respiratory epithelial cells (ERECs) and in fully differentiated ERECs cultured at the air-fluid interface (AFI) (at protein level). Constitutively expressed in peripheral blood mononuclear cells (PBMCs), lymph nodes and spleen. The level of expression in PBMCs is about 2- to 3-fold higher than that in lymph nodes and spleen. Very low expression in liver, heart, lung, kidney, small intestine, colon and stomach. Low expression in the airway tissue epithelium of the larynx, upper trachea, middle tranchea, lower trachea, bronchus and spleen, and more abundant expression in mesenteric lymph node. Not expressed in fully differentiated bronchus epithelial cells cultured at the AFI for four weeks. Expressed in gingival tissue.

The protein localises to the endoplasmic reticulum membrane. It localises to the endosome. It is found in the lysosome. The protein resides in the cytoplasmic vesicle. Its subcellular location is the phagosome. The protein localises to the cell membrane. It localises to the cytoplasm. It is found in the nucleus. Key component of innate and adaptive immunity. TLRs (Toll-like receptors) control host immune response against pathogens through recognition of molecular patterns specific to microorganisms. TLR9 is a nucleotide-sensing TLR which is activated by unmethylated cytidine-phosphate-guanosine (CpG) dinucleotides. Acts via MYD88 and TRAF6, leading to NF-kappa-B activation, cytokine secretion and the inflammatory response. Upon CpG stimulation, induces B-cell proliferation, activation, survival and antibody production. In Equus caballus (Horse), this protein is Toll-like receptor 9.